A 212-amino-acid polypeptide reads, in one-letter code: Claudin-7-A (212 aa).

Topologically, residues M1 to Q7 are cytoplasmic. The helical transmembrane segment at L8–P28 threads the bilayer. The Extracellular segment spans residues Q29 to R81. Residues A82–M102 form a helical membrane-spanning segment. At K103–A119 the chain is on the cytoplasmic side. The chain crosses the membrane as a helical span at residues M120–F140. Residues A141–G162 lie on the Extracellular side of the membrane. The helical transmembrane segment at A163–A183 threads the bilayer. Topologically, residues A184–V212 are cytoplasmic. The segment at Q191–V212 is disordered.

It belongs to the claudin family.

Its subcellular location is the cell junction. The protein localises to the tight junction. It localises to the cell membrane. Functionally, plays a major role in tight junction-specific obliteration of the intercellular space. The polypeptide is Claudin-7-A (Danio rerio (Zebrafish)).